The sequence spans 131 residues: Metalloproteinase inhibitor (131 aa).

Residues 1 to 29 form the signal peptide; sequence MVRKRALGLAGSALTLVLGAVGFTAPAQA. Cystine bridges form between Cys33-Cys39 and Cys93-Cys98.

In terms of biological role, inhibits microbial metallo-proteinases, such as thermolysin, but not serine, thiol, or carboxyl proteinases. The protein is Metalloproteinase inhibitor (smpI) of Streptomyces nigrescens.